The chain runs to 317 residues: Cytochrome c biogenesis protein CcsA (317 aa).

Helical transmembrane passes span 13-35, 44-64, 71-91, 143-163, 171-191, 225-245, and 286-306; these read ISFS…HEIV, GMIA…IYSG, LYES…VPYF, MLLS…LLVI, MIGF…IKYL, VIGL…VWAN, and AIVA…VNLL.

Belongs to the CcmF/CycK/Ccl1/NrfE/CcsA family. In terms of assembly, may interact with Ccs1.

It localises to the plastid. The protein resides in the chloroplast thylakoid membrane. Required during biogenesis of c-type cytochromes (cytochrome c6 and cytochrome f) at the step of heme attachment. This chain is Cytochrome c biogenesis protein CcsA, found in Illicium oligandrum (Star anise).